Consider the following 636-residue polypeptide: Ligand-gated ion channel 4 (636 aa).

The signal sequence occupies residues 1 to 25 (MVICHSCTTFCILLVIDLVPCRIVG). Topologically, residues 26–326 (MENVENRVMF…IHMHRRPLFY (301 aa)) are extracellular. Residues Asn-45, Asn-141, Asn-179, and Asn-227 are each glycosylated (N-linked (GlcNAc...) asparagine). Cys-240 and Cys-254 are joined by a disulfide. Asn-284 carries N-linked (GlcNAc...) asparagine glycosylation. A run of 3 helical transmembrane segments spans residues 327 to 347 (VFNH…GFLM), 357 to 377 (MIIT…ESIP), and 383 to 403 (VPLI…ATCV). At 404–602 (NVITLNMHRN…QLASVVDRLL (199 aa)) the chain is on the cytoplasmic side. Residues 603 to 623 (LCLFCTATLFTIICLLIVPVV) traverse the membrane as a helical segment.

Belongs to the ligand-gated ion channel (TC 1.A.9) family.

It is found in the postsynaptic cell membrane. It localises to the cell membrane. In terms of biological role, acetylcholine receptor. The chain is Ligand-gated ion channel 4 from Caenorhabditis briggsae.